We begin with the raw amino-acid sequence, 230 residues long: Probable methylthioribulose-1-phosphate dehydratase (230 aa).

Cys-87 serves as a coordination point for substrate. The Zn(2+) site is built by His-105 and His-107. Catalysis depends on Glu-129, which acts as the Proton donor/acceptor. Position 185 (His-185) interacts with Zn(2+).

This sequence belongs to the aldolase class II family. MtnB subfamily. Zn(2+) serves as cofactor.

It localises to the cytoplasm. The enzyme catalyses 5-(methylsulfanyl)-D-ribulose 1-phosphate = 5-methylsulfanyl-2,3-dioxopentyl phosphate + H2O. Its pathway is amino-acid biosynthesis; L-methionine biosynthesis via salvage pathway; L-methionine from S-methyl-5-thio-alpha-D-ribose 1-phosphate: step 2/6. Functionally, catalyzes the dehydration of methylthioribulose-1-phosphate (MTRu-1-P) into 2,3-diketo-5-methylthiopentyl-1-phosphate (DK-MTP-1-P). In Drosophila pseudoobscura pseudoobscura (Fruit fly), this protein is Probable methylthioribulose-1-phosphate dehydratase.